The sequence spans 620 residues: Chaperone protein HscA homolog (620 aa).

Belongs to the heat shock protein 70 family.

Functionally, chaperone involved in the maturation of iron-sulfur cluster-containing proteins. Has a low intrinsic ATPase activity which is markedly stimulated by HscB. The polypeptide is Chaperone protein HscA homolog (Shewanella sediminis (strain HAW-EB3)).